The following is a 226-amino-acid chain: ATP synthase F(0) complex subunit a (226 aa).

The next 7 helical transmembrane spans lie at S11–I31, L37–M54, L72–F92, L98–T118, I138–V158, T178–L198, and L199–I219.

Belongs to the ATPase A chain family. As to quaternary structure, component of the ATP synthase complex composed at least of ATP5F1A/subunit alpha, ATP5F1B/subunit beta, ATP5MC1/subunit c (homooctomer), MT-ATP6/subunit a, MT-ATP8/subunit 8, ATP5ME/subunit e, ATP5MF/subunit f, ATP5MG/subunit g, ATP5MK/subunit k, ATP5MJ/subunit j, ATP5F1C/subunit gamma, ATP5F1D/subunit delta, ATP5F1E/subunit epsilon, ATP5PF/subunit F6, ATP5PB/subunit b, ATP5PD/subunit d, ATP5PO/subunit OSCP. ATP synthase complex consists of a soluble F(1) head domain (subunits alpha(3) and beta(3)) - the catalytic core - and a membrane F(0) domain - the membrane proton channel (subunits c, a, 8, e, f, g, k and j). These two domains are linked by a central stalk (subunits gamma, delta, and epsilon) rotating inside the F1 region and a stationary peripheral stalk (subunits F6, b, d, and OSCP). Interacts with DNAJC30; interaction is direct.

It localises to the mitochondrion inner membrane. The enzyme catalyses H(+)(in) = H(+)(out). In terms of biological role, subunit a, of the mitochondrial membrane ATP synthase complex (F(1)F(0) ATP synthase or Complex V) that produces ATP from ADP in the presence of a proton gradient across the membrane which is generated by electron transport complexes of the respiratory chain. ATP synthase complex consist of a soluble F(1) head domain - the catalytic core - and a membrane F(1) domain - the membrane proton channel. These two domains are linked by a central stalk rotating inside the F(1) region and a stationary peripheral stalk. During catalysis, ATP synthesis in the catalytic domain of F(1) is coupled via a rotary mechanism of the central stalk subunits to proton translocation. With the subunit c (ATP5MC1), forms the proton-conducting channel in the F(0) domain, that contains two crucial half-channels (inlet and outlet) that facilitate proton movement from the mitochondrial intermembrane space (IMS) into the matrix. Protons are taken up via the inlet half-channel and released through the outlet half-channel, following a Grotthuss mechanism. This Lycodon semicarinatus (Ryukyu odd-tooth snake) protein is ATP synthase F(0) complex subunit a.